The sequence spans 61 residues: Large ribosomal subunit protein uL30 (61 aa).

Belongs to the universal ribosomal protein uL30 family. As to quaternary structure, part of the 50S ribosomal subunit.

The chain is Large ribosomal subunit protein uL30 from Oenococcus oeni (strain ATCC BAA-331 / PSU-1).